We begin with the raw amino-acid sequence, 403 residues long: MTERVVLAYSGGLDTSVAIPYLAEQTGAEVIAVAVDVGQGGEDLDAIRQRALDCGAVESEVVDARDEFAAEYCLPAVRANSLYMDRYPLVSALSRPLIVKHLVAAARTHGGTIVSHGCTGKGNDQVRFEAGLGALAPDLRIVAPARDFAWTRDKAIAFAEEKGLPIDVTAKSPYSIDQNLWGRAVETGFLEDIWNPPIEDLYAYTADPAEPRDADEVVITFDAGNPVAIDGETVTPYQAIVELNRRAGAQGVGRLDMVEDRLVGIKSREVYEAPGAIALIAAHQELEAVTVERDLARFKRGVDQRWGELVYDGLWFSPLRAALDAFVNDAQQHVSGDVRLTLHGGRATVTGRRSEASLYDFGLATYDTGDTFDQSLAKGFVQLWGLPSKMSAARDARLGGAQS.

8–16 (AYSGGLDTS) is a binding site for ATP. Tyr87 lines the L-citrulline pocket. Gly117 is a binding site for ATP. The L-aspartate site is built by Thr119, Asn123, and Asp124. Position 123 (Asn123) interacts with L-citrulline. Positions 127, 175, 259, and 271 each coordinate L-citrulline.

It belongs to the argininosuccinate synthase family. Type 1 subfamily. In terms of assembly, homotetramer.

It localises to the cytoplasm. It catalyses the reaction L-citrulline + L-aspartate + ATP = 2-(N(omega)-L-arginino)succinate + AMP + diphosphate + H(+). The protein operates within amino-acid biosynthesis; L-arginine biosynthesis; L-arginine from L-ornithine and carbamoyl phosphate: step 2/3. This is Argininosuccinate synthase from Salinispora arenicola (strain CNS-205).